The primary structure comprises 110 residues: MKKALQVAMFSLFTVIGFNAQANEHHHETMSEAQPQVISATGVVKGFDLESKKITIHHDPIAAVNWPEMTMRFTITPQTKMSGIKTGDKVAFNFVQQGNLSLLQDIKVSQ.

A signal peptide spans 1–21 (MKKALQVAMFSLFTVIGFNAQ).

In terms of assembly, the cus efflux system is composed of CusA, CusB, CusC and CusF.

Its subcellular location is the periplasm. Its function is as follows. Part of a cation efflux system that mediates resistance to copper and silver. Binds one copper per polypeptide. In Escherichia coli O157:H7, this protein is Cation efflux system protein CusF (cusF).